The following is a 336-amino-acid chain: 3-isopropylmalate dehydrogenase (336 aa).

Substrate-binding residues include R87, R97, R121, and D211. Positions 211, 235, and 239 each coordinate Mg(2+). 271 to 283 is an NAD(+) binding site; it reads GSAPDIAGQGIAD.

This sequence belongs to the isocitrate and isopropylmalate dehydrogenases family. LeuB type 2 subfamily. As to quaternary structure, homodimer. Requires Mg(2+) as cofactor. Mn(2+) is required as a cofactor.

The protein resides in the cytoplasm. The catalysed reaction is (2R,3S)-3-isopropylmalate + NAD(+) = 4-methyl-2-oxopentanoate + CO2 + NADH. It functions in the pathway amino-acid biosynthesis; L-leucine biosynthesis; L-leucine from 3-methyl-2-oxobutanoate: step 3/4. In terms of biological role, catalyzes the oxidation of 3-carboxy-2-hydroxy-4-methylpentanoate (3-isopropylmalate) to 3-carboxy-4-methyl-2-oxopentanoate. The product decarboxylates to 4-methyl-2 oxopentanoate. This Mycolicibacterium paratuberculosis (strain ATCC BAA-968 / K-10) (Mycobacterium paratuberculosis) protein is 3-isopropylmalate dehydrogenase.